A 36-amino-acid chain; its full sequence is MTASYLPSILVPLVGLVFPAITLASLFIYIEQDEIV.

A helical membrane pass occupies residues 7-29; sequence PSILVPLVGLVFPAITLASLFIY.

The protein belongs to the PsaI family.

It is found in the plastid. The protein resides in the chloroplast thylakoid membrane. In terms of biological role, may help in the organization of the PsaL subunit. The polypeptide is Photosystem I reaction center subunit VIII (Anthoceros angustus (Hornwort)).